An 873-amino-acid chain; its full sequence is Envelope glycoprotein B (873 aa).

Residues 1-21 (MASLKMLICVCVAILIPSTLS) form the signal peptide. Residues 22-740 (QDSHGIAGII…SGIASFLSNP (719 aa)) lie on the Virion surface side of the membrane. 5 cysteine pairs are disulfide-bonded: Cys-67–Cys-525, Cys-84–Cys-481, Cys-157–Cys-219, Cys-311–Cys-359, and Cys-548–Cys-598. Residues Asn-92 and Asn-111 are each glycosylated (N-linked (GlcNAc...) asparagine; by host). An involved in fusion and/or binding to host membrane region spans residues 124-130 (TWALFSR). Asn-201 carries N-linked (GlcNAc...) asparagine; by host glycosylation. An involved in fusion and/or binding to host membrane region spans residues 206 to 213 (HQTLGYRT). N-linked (GlcNAc...) asparagine; by host glycosylation is found at Asn-252 and Asn-350. The tract at residues 418–447 (QNHLPRGRERRQAAGRRTASLQSGPQGDRI) is disordered. 3 N-linked (GlcNAc...) asparagine; by host glycosylation sites follow: Asn-569, Asn-625, and Asn-639. Hydrophobic membrane proximal region stretches follow at residues 684 to 738 (IDTV…SFLS) and 715 to 734 (LGTVVMTAAAAVISTVSGIA). Residues 741-761 (FAALGIGIAVVVSIILGLLAF) traverse the membrane as a helical segment. The Intravirion portion of the chain corresponds to 762-873 (KYVMNLKSNP…PSWAEESEDE (112 aa)). The tract at residues 781–807 (PPAGTPPRPSRRYYKDEEEVEEDSDED) is disordered. Positions 796 to 807 (DEEEVEEDSDED) are enriched in acidic residues. Residues 858–861 (YPLL) carry the Internalization motif motif.

This sequence belongs to the herpesviridae glycoprotein B family. In terms of assembly, homotrimer; disulfide-linked. Binds to heparan sulfate proteoglycans. Interacts with gH/gL heterodimer. Post-translationally, a proteolytic cleavage by host furin generates two subunits that remain linked by disulfide bonds.

The protein localises to the virion membrane. Its subcellular location is the host cell membrane. It localises to the host endosome membrane. The protein resides in the host Golgi apparatus membrane. Functionally, envelope glycoprotein that forms spikes at the surface of virion envelope. Essential for the initial attachment to heparan sulfate moieties of the host cell surface proteoglycans. Involved in fusion of viral and cellular membranes leading to virus entry into the host cell. Following initial binding to its host receptors, membrane fusion is mediated by the fusion machinery composed at least of gB and the heterodimer gH/gL. May be involved in the fusion between the virion envelope and the outer nuclear membrane during virion egress. This is Envelope glycoprotein B from Infectious laryngotracheitis virus (strain 632) (ILTV).